The sequence spans 391 residues: O-methyltransferase ATR12 (391 aa).

S-adenosyl-L-methionine contacts are provided by residues 233 to 234 (GG), Asp259, and 279 to 280 (DF). The active-site Proton acceptor is His299.

The protein belongs to the class I-like SAM-binding methyltransferase superfamily. Cation-independent O-methyltransferase family. COMT subfamily.

The protein operates within mycotoxin biosynthesis. O-methyltransferase; part of the core atranone cluster (CAC) which products are predicted to catalyze most or all steps of mycotoxin atranone synthesis, starting from geranylgeranyl pyrophosphate (GGPP). The initial cyclization of GGPP to dolabellane is probably performed by the terpene cyclase ATR13. The Baeyer-Villiger oxidation near the end of the atranone synthesis, which converts atranones D and E to atranones F and G is predicted to be catalyzed by the monooxygenase ATR8. Of the CAC's other predicted gene products, the reducing PKS ATR6 might synthesize a polyketide chain. This polyketide is probably transferred onto the atranone backbone by the polyketide transferase ATR5. Other predicted CAC products include 4 oxygenases (ATR2, ATR3, ATR4, and ATR14), 3 short-chain reductases (ATR7, ATR9, and ATR10), and a methyltransferase (ATR12). These may all be involved in the various steps of atranone biosynthesis, although their specific roles must await experimental determination. The chain is O-methyltransferase ATR12 from Stachybotrys chlorohalonatus (strain IBT 40285).